The following is a 171-amino-acid chain: MDKLRAKIRDIPDFPKPGILFRDITPLVKDPAALRLAIHQLVHPFVGEDITAVAGMEARGFIFGALAAWELGVGFVPLRKPGKLPYNVQSIDYDLEYGSARLEVHLDALGVGDRVLMVDDLLATGGTARASCSLVESLGAEVAACAFVIELDALEGREALHGRRVHSLLHY.

It belongs to the purine/pyrimidine phosphoribosyltransferase family. Homodimer.

It is found in the cytoplasm. The catalysed reaction is AMP + diphosphate = 5-phospho-alpha-D-ribose 1-diphosphate + adenine. It participates in purine metabolism; AMP biosynthesis via salvage pathway; AMP from adenine: step 1/1. In terms of biological role, catalyzes a salvage reaction resulting in the formation of AMP, that is energically less costly than de novo synthesis. This chain is Adenine phosphoribosyltransferase, found in Methylococcus capsulatus (strain ATCC 33009 / NCIMB 11132 / Bath).